The primary structure comprises 600 residues: Methylenetetrahydrofolate reductase 2 (600 aa).

Glu-22 functions as the Proton donor/acceptor in the catalytic mechanism. Residues 22–27 (EYFVPK) and 54–55 (TW) contribute to the NAD(+) site. FAD contacts are provided by residues 54-55 (TW), His-84, 114-116 (RGD), 133-134 (YA), Tyr-156, Asp-171, and Lys-178. Asp-116 lines the substrate pocket. Residues Gln-189 and Tyr-282 each coordinate substrate.

Belongs to the methylenetetrahydrofolate reductase family. It depends on FAD as a cofactor.

It catalyses the reaction (6S)-5-methyl-5,6,7,8-tetrahydrofolate + NADP(+) = (6R)-5,10-methylene-5,6,7,8-tetrahydrofolate + NADPH + H(+). Its pathway is one-carbon metabolism; tetrahydrofolate interconversion. In Saccharomyces cerevisiae (strain ATCC 204508 / S288c) (Baker's yeast), this protein is Methylenetetrahydrofolate reductase 2 (MET13).